The primary structure comprises 258 residues: Global transcriptional regulator CodY (258 aa).

The tract at residues 1–156 is GAF domain; that stretch reads MSSLLDKTRM…SATIIGLEIL (156 aa). A DNA-binding region (H-T-H motif) is located at residues 204-223; sequence ASKIADKVGITRSVIVNALR.

This sequence belongs to the CodY family.

Its subcellular location is the cytoplasm. In terms of biological role, DNA-binding global transcriptional regulator which is involved in the adaptive response to starvation and acts by directly or indirectly controlling the expression of numerous genes in response to nutrient availability. During rapid exponential growth, CodY is highly active and represses genes whose products allow adaptation to nutrient depletion. This is Global transcriptional regulator CodY from Clostridium botulinum (strain ATCC 19397 / Type A).